A 245-amino-acid polypeptide reads, in one-letter code: Ureidoacrylate amidohydrolase RutB (245 aa).

Asp38 serves as the catalytic Proton acceptor. Lys147 is an active-site residue. Catalysis depends on Cys180, which acts as the Nucleophile.

This sequence belongs to the isochorismatase family. RutB subfamily.

The enzyme catalyses (Z)-3-ureidoacrylate + H2O + H(+) = (Z)-3-aminoacrylate + NH4(+) + CO2. The catalysed reaction is (Z)-3-ureidoacrylate + H2O = (Z)-3-aminoacrylate + carbamate + H(+). It catalyses the reaction (Z)-2-methylureidoacrylate + H2O + H(+) = (Z)-2-methylaminoacrylate + NH4(+) + CO2. Functionally, hydrolyzes ureidoacrylate to form aminoacrylate and carbamate. The carbamate hydrolyzes spontaneously, thereby releasing one of the nitrogen atoms of the pyrimidine ring as ammonia and one of its carbon atoms as CO2. The polypeptide is Ureidoacrylate amidohydrolase RutB (Acinetobacter baylyi (strain ATCC 33305 / BD413 / ADP1)).